Here is a 474-residue protein sequence, read N- to C-terminus: Synaptotagmin-17 (474 aa).

Residues 60–112 form a disordered region; sequence WLMASRSSDKDGDSVHTASEVPLTPRTNSPDGRRSSSDTSKSTYSLTRRISSL. Residues 96–112 show a composition bias toward low complexity; it reads SDTSKSTYSLTRRISSL. Phosphoserine is present on residues S118 and S119. C2 domains follow at residues 184 to 310 and 321 to 455; these read QLGM…HWWK and ELGE…EQWH.

The protein belongs to the synaptotagmin family. Expressed abundantly in brain (frontal and temporal lobes, hippocampus, hypothalamus, amygdala, substantia nigra, and pituitary), kidney, and prostate. Expressed in fetal brain, kidney and lung. Expressed in melanocytes.

The protein resides in the membrane. Its function is as follows. Plays a role in dendrite formation by melanocytes. This chain is Synaptotagmin-17 (SYT17), found in Homo sapiens (Human).